Consider the following 336-residue polypeptide: Toluate 1,2-dioxygenase electron transfer component (336 aa).

The region spanning 3–97 (HKVATDFEDG…DCVIRVPAAS (95 aa)) is the 2Fe-2S ferredoxin-type domain. Positions 40, 45, 48, and 81 each coordinate [2Fe-2S] cluster. Positions 99–336 (VCKTQQAGYQ…FYYEKFAASA (238 aa)) are ferredoxin-reductase. The FAD-binding FR-type domain occupies 104 to 204 (QAGYQAAISN…AGPLGAFYLR (101 aa)).

Belongs to the bacterial ring-hydroxylating dioxygenase ferredoxin reductase family. In terms of assembly, this dioxygenase system consists of three proteins: the two subunits of the hydroxylase component (XylX and XylY), and an electron transfer component (XylZ). FAD serves as cofactor. [2Fe-2S] cluster is required as a cofactor.

The enzyme catalyses 2 reduced [2Fe-2S]-[ferredoxin] + NAD(+) + H(+) = 2 oxidized [2Fe-2S]-[ferredoxin] + NADH. Electron transfer component of toluate 1,2-dioxygenase system. The sequence is that of Toluate 1,2-dioxygenase electron transfer component (xylZ) from Pseudomonas putida (Arthrobacter siderocapsulatus).